The chain runs to 142 residues: 3-hydroxyacyl-[acyl-carrier-protein] dehydratase FabZ (142 aa).

The active site involves H47.

This sequence belongs to the thioester dehydratase family. FabZ subfamily.

It is found in the cytoplasm. It carries out the reaction a (3R)-hydroxyacyl-[ACP] = a (2E)-enoyl-[ACP] + H2O. Its function is as follows. Involved in unsaturated fatty acids biosynthesis. Catalyzes the dehydration of short chain beta-hydroxyacyl-ACPs and long chain saturated and unsaturated beta-hydroxyacyl-ACPs. The protein is 3-hydroxyacyl-[acyl-carrier-protein] dehydratase FabZ of Thermoanaerobacter pseudethanolicus (strain ATCC 33223 / 39E) (Clostridium thermohydrosulfuricum).